A 3092-amino-acid chain; its full sequence is MNQSDPQDKKNFPMEYSLTKHLFFDRLLLVLPIESNLKTYADVEADSVFNSCRSIILNIAITKDLNPIIENTLGLIDLIVQDEEITSDNITDDIAHSILVLLRLLSDVFEYYWDQNNDFKKIRNDNYKPGFSSHRPNFHTSRPKHTRINPALATMLLCKISKLKFNTRTLKVLQNMSHHLSGSATISKSSILPDSQEFLQKRNYPAYTEKIDLTIDYIQRFISASNHVEFTKCVKTKVVAPLLISHTSTELGVVNHLDLFGCEYLTDKNLLAYLDILQHLSSYMKRTIFHSLLLYYASKAFLFWIMARPKEYVKIYNNLISSDYNSPSSSSDNGGSNNSDKTSISQLVSLLFDDVYSTFSVSSLLTNVNNDHHYHLHHSSSSSKTTNTNSPNSISKTSIKQSSVNASGNVSPSQFSTGNDASPTSPMASLSSPLNTNILGYPLSPITSTLGQANTSTSTTAATTKTDADTPSTMNTNNNNNNNNSANLNNIPQRIFSLDDISSFNSSRKSLNLDDSNSLFLWDTSQHSNASMTNTNMHAGVNNSQSQNDQSSLNYMENIMELYSNYTGSELSSHTAILRFLVVLTLLDSEVYDEMNSNSYRKISEPIMNINPKDSNTSSWGSASKNPSIRHLTHGLKKLTLQQGRKRNVKFLTYLIRNLNGGQFVSDVSLIDSIRSILFLMTMTSSISQIDSNIASVIFSKRFYNLLGQNLEVGTNWNSATANTFISHCVERNPLTHRRLQLEFFASGLQLDSDLFLRHLQLEKELNHIDLPKISLYTEGFRVFFHLVSTKKLHEDIAEKTSSVLKRLFCIIADILLKATPYFDDNVTKIIASILDGHILDQFDAARTLSNDDHVSFDAATSVYTEPTEIIHNSSDASLVSSLSQSPLSINSGSNITNTRTWDIQSILPTLSNRSSASDLSLSNILTNPLEAQQNNNANLLAHRLSGVPTTKRYASPNDSERSRQSPYSSPPQLQQSDLPSPLSVLSSSAGFSSNHSITATPTILKNIKSPKPNKTKKIADDKQLKQPSYSRVILSDNDEARKIMMNIFSIFKRMTNWFIRPDANTEFPKTFTDIIKPLFVSILDSNQRLQVTARAFIEIPLSYIATFEDIDNDLDPRVLNDHYLLCTYAVTLFASSLFDLKLENAKREMLLDIIVKFQRVRSYLSNLAEKHNLVQAIITTERLTLPLLVGAVGSGIFISLYCSRGNTPRLIKISCCEFLRSLRFYQKYVGALDQYSIYNIDFIDAMAQDNFTASGSVALQRRLRNNILTYIKGSDSILLDSMDVIYKKWFYFSCSKSVTQEELVDFRSLAGILASMSGILSDMQELEKSKSAPDNEGDSLSFESRNPAYEVHKSLKLELTKKMNFFISKQCQWLNNPNLLTRENSRDILSIELHPLSFNLLFNNLGLKIDELMSIDLSKSHEDSSFVLLEQIIIIIRTILKRDDDEKIMLLFSTDLLDAVDKLIEIVEKISIKSSKYYKGIIQMSKMFRAFEHSEKNLGISNHFHLKNKWLKLVIGWFKLSINKDYDFENLSRPLREMDLQKRDEDFLYIDTSIESAKALAYLTHNVPLEIPPSSSKEDWNRSSTVSFGNHFTILLKGLEKSADLNQFPVSLRHKISILNENVIIALTNLSNANVNVSLKFTLPMGYSPNKDIRIAFLRVFIDIVTNYPVNPEKHEMDKMLAIDDFLKYIIKNPILAFFGSLACSPADVDLYAGGFLNAFDTRNASHILVTELLKQEIKRAARSDDILRRNSCATRALSLYTRSRGNKYLIKTLRPVLQGIVDNKESFEIDKMKPGSENSEKMLDLFEKYMTRLIDAITSSIDDFPIELVDICKTIYNAASVNFPEYAYIAVGSFVFLRFIGPALVSPDSENIIIVTHAHDRKPFITLAKVIQSLANGRENIFKKDILVSKEEFLKTCSDKIFNFLSELCKIPTNNFTVNVREDPTPISFDYSFLHKFFYLNEFTIRKEIINESKLPGEFSFLKNTVMLNDKILGVLGQPSMEIKNEIPPFVVENREKYPSLYEFMSRYAFKKVDMKEEEEDNAPFVHEAMTLDGIQIIVVTFTNCEYNNFVMDSLVYKVLQIYARMWCSKHYVVIDCTTFYGGKANFQKLTTLFFSLIPEQASSNCMGCYYFNVNKSFMDQWASSYTVENPYLVTTIPRCFINSNTDQSLIKSLGLSGRSLEVLKDVRVTLHDITLYDKEKKKFCPVSLKIGNKYFQVLHEIPQLYKVTVSNRTFSIKFNNVYKISNLISVDVSNTTGVSSEFTLSLDNEEKLVFCSPKYLEIVKMFYYAQLKMEEDFGTDFSNDISFSTSSSAVNASYCNVKEVGEIISHLSLVILVGLFNEDDLVKNISYNLLVATQEAFNLDFGTRLHKSPETYVPDDTTTFLALIFKAFSESSTELTPYIWKYMLDGLENDVIPQEHIPTVVCSLSYWVPNLYEHVYLANDEEGPEAISRIIYSLIRLTVKEPNFTTAYLQQIWFLLALDGRLTNVIVEEIVSHALDRDSENRDWMKAVSILTSFPTTEIACQVIEKLINMIKSFLPSLAVEASAHSWSELTILSKISVSIFFESPLLSQMYLPEILFAVSLLIDVGPSEIRVSLYELLMNVCHSLTNNESLPERNRKNLDIVCATFARQKLNFISGFSQEKGRVLPNFAASSFSSKFGTLDLFTKNIMLLMEYGSISEGAQWEAKYKKYLMDAIFGHRSFFSARAMMILGIMSKSHTSLFLCKELLVETMKVFAEPVVDDEQMFIIIAHVFTYSKIVEGLDPSSELMKELFWLATICVESPHPLLFEGGLLFMVNCLKRLYTVHLQLGFDGKSLAKKLMESRNFAATLLAKLESYNGCIWNEDNFPHIILGFIANGLSIPVVKGAALDCLQALFKNTYYERKSNPKSSDYLCYLFLLHLVLSPEQLSTLLLEVGFEDELVPLNNTLKVPLTLINWLSSDSDKSNIVLYQGALLFSCVMSDEPCKFRFALLMRYLLKVNPICVFRFYTLTRKEFRRLSTLEQSSEAVAVSFELIGMLVTHSEFNYLEEFNDEMVELLKKRGLSVVKPLDIFDQEHIEKLKGEGEHQVAIYERKRLATMILARMSCS.

Disordered regions lie at residues 375 to 430 and 450 to 487; these read HLHH…MASL and LGQANTSTSTTAATTKTDADTPSTMNTNNNNNNNNSAN. The segment covering 379–400 has biased composition (low complexity); it reads SSSSSKTTNTNSPNSISKTSIK. Over residues 401 to 430 the composition is skewed to polar residues; the sequence is QSSVNASGNVSPSQFSTGNDASPTSPMASL. Over residues 455–487 the composition is skewed to low complexity; it reads TSTSTTAATTKTDADTPSTMNTNNNNNNNNSAN. Phosphoserine is present on residues serine 497 and serine 915. 2 disordered regions span residues 946–988 and 1003–1023; these read SGVP…VLSS and TILKNIKSPKPNKTKKIADDK. Positions 965-988 are enriched in low complexity; sequence QSPYSSPPQLQQSDLPSPLSVLSS. Serine 1342 carries the phosphoserine modification. The region spanning 1725–1930 is the Ras-GAP domain; the sequence is NASHILVTEL…DKIFNFLSEL (206 aa). 2 positions are modified to phosphoserine; by PKA: serine 1753 and serine 3004.

The protein localises to the cytoplasm. Its function is as follows. Inhibitory regulator of the Ras-cyclic AMP pathway in S.cerevisiae. Stimulates the GTPase activity of Ras proteins. This is Inhibitory regulator protein IRA1 (IRA1) from Saccharomyces cerevisiae (strain ATCC 204508 / S288c) (Baker's yeast).